The following is a 437-amino-acid chain: MSSVVVVGAQWGDEGKGKIVDLLTKYSDYIVRFQGGNNAGHTLVVDGKKFVFHIIPSGILYEEKTCMIGNGVILDPGVLLEEMASLKERGLEVKPNRLMISDNAHLIMPYHSQLDQAKESALSASNKIGTTGRGIGPCYMDKVGRVGIKAGDLLDEDLFREKLRCAIEEKNFILTKKFGAPAVDFDSVYRQFMDFAEQLSPYFGNVSVTLDEARRADKNILFEGAQGTQLDIDHGTYPFVTSSNTVAGNACAGSGFGPSHIDAVVGIVKAYTTRVGSGPFPTELFDEKGEELQNKGSEFGATTGRRRRCGWFDGVVANDAVRLNGLTGWALTKLDVLSGQKSIKMASSYDLNGKKLHAMPNNIKDAEALKPVYEEVPGWADEVDGICNYDDLPTEAKDYVRRIEDFTGVPANIVSVGPDRAQTMMLSNPFETKKCCK.

GTP-binding positions include glycine 12–lysine 18 and glycine 40–threonine 42. Residue aspartate 13 is the Proton acceptor of the active site. Mg(2+)-binding residues include aspartate 13 and glycine 40. Residues aspartate 13–lysine 16, asparagine 38–histidine 41, threonine 131, arginine 145, glutamine 226, threonine 241, and arginine 305 each bind IMP. The active-site Proton donor is histidine 41. A substrate-binding site is contributed by alanine 301 to arginine 307. Residues arginine 307, lysine 333–aspartate 335, and serine 415–glycine 417 each bind GTP.

This sequence belongs to the adenylosuccinate synthetase family. In terms of assembly, homodimer. The cofactor is Mg(2+).

Its subcellular location is the cytoplasm. It catalyses the reaction IMP + L-aspartate + GTP = N(6)-(1,2-dicarboxyethyl)-AMP + GDP + phosphate + 2 H(+). The protein operates within purine metabolism; AMP biosynthesis via de novo pathway; AMP from IMP: step 1/2. Plays an important role in the de novo pathway of purine nucleotide biosynthesis. Catalyzes the first committed step in the biosynthesis of AMP from IMP. This is Adenylosuccinate synthetase from Desulfotalea psychrophila (strain LSv54 / DSM 12343).